The following is a 251-amino-acid chain: Diphthine synthase (251 aa).

Residues Asp83, Leu86, 111–112, Leu163, and Leu205 contribute to the S-adenosyl-L-methionine site; that span reads SI.

Belongs to the diphthine synthase family. As to quaternary structure, homodimer.

The catalysed reaction is 2-[(3S)-amino-3-carboxypropyl]-L-histidyl-[translation elongation factor 2] + 3 S-adenosyl-L-methionine = diphthine-[translation elongation factor 2] + 3 S-adenosyl-L-homocysteine + 3 H(+). The protein operates within protein modification; peptidyl-diphthamide biosynthesis. In terms of biological role, S-adenosyl-L-methionine-dependent methyltransferase that catalyzes the trimethylation of the amino group of the modified target histidine residue in translation elongation factor 2 (EF-2), to form an intermediate called diphthine. The three successive methylation reactions represent the second step of diphthamide biosynthesis. The chain is Diphthine synthase from Pyrobaculum calidifontis (strain DSM 21063 / JCM 11548 / VA1).